Here is a 683-residue protein sequence, read N- to C-terminus: Bifunctional lysine-specific demethylase and histidyl-hydroxylase NO66 (683 aa).

A compositionally biased stretch (polar residues) spans 1-26 (MHKASTSSANRANFQGNHKTQKSPNN). Disordered regions lie at residues 1–162 (MHKA…SPIQ) and 179–208 (AAGA…AAKS). Basic and acidic residues predominate over residues 54–65 (LTKEQKERRKMM). The segment covering 85–94 (IDTSASTSNK) has biased composition (polar residues). A compositionally biased stretch (basic residues) spans 95-108 (GKSKAARPTDRKRR). Low complexity predominate over residues 116-125 (PADANNNNTK). Ser152 carries the phosphoserine modification. Thr158 carries the phosphothreonine modification. The residue at position 159 (Ser159) is a Phosphoserine. Residues 179 to 189 (AAGASGASGPA) are compositionally biased toward low complexity. Residues 341-480 (NPSTYLVGLR…NLLEKLMPIV (140 aa)) enclose the JmjC domain. Residues His381, Asp383, and His446 each contribute to the Fe cation site.

It belongs to the ROX family. NO66 subfamily. The cofactor is Fe(2+).

The protein localises to the nucleus. The catalysed reaction is N(6),N(6)-dimethyl-L-lysyl(36)-[histone H3] + 2 2-oxoglutarate + 2 O2 = L-lysyl(36)-[histone H3] + 2 formaldehyde + 2 succinate + 2 CO2. Functionally, oxygenase that can act as both a histone lysine demethylase and a ribosomal histidine hydroxylase. Specifically demethylates 'Lys-4' (H3K4me) and 'Lys-36' (H3K36me) of histone H3, thereby playing a central role in histone code. This is Bifunctional lysine-specific demethylase and histidyl-hydroxylase NO66 from Drosophila yakuba (Fruit fly).